The chain runs to 166 residues: Small ribosomal subunit protein uS5 (166 aa).

One can recognise an S5 DRBM domain in the interval 11–74 (LNEKLIAVNR…EKARRNMFTI (64 aa)).

This sequence belongs to the universal ribosomal protein uS5 family. In terms of assembly, part of the 30S ribosomal subunit. Contacts proteins S4 and S8.

Functionally, with S4 and S12 plays an important role in translational accuracy. Located at the back of the 30S subunit body where it stabilizes the conformation of the head with respect to the body. This chain is Small ribosomal subunit protein uS5, found in Aliivibrio fischeri (strain ATCC 700601 / ES114) (Vibrio fischeri).